Here is a 137-residue protein sequence, read N- to C-terminus: Small ribosomal subunit protein uS9 (137 aa).

A disordered region spans residues 105–137; it reads LKAEGYLTRDPRAKERKKYGLHKARKAPQYSKR. The segment covering 118–137 has biased composition (basic residues); it reads KERKKYGLHKARKAPQYSKR.

It belongs to the universal ribosomal protein uS9 family.

This chain is Small ribosomal subunit protein uS9 (rpsI), found in Synechocystis sp. (strain ATCC 27184 / PCC 6803 / Kazusa).